The chain runs to 362 residues: Inactive 2'-5' oligoadenylate synthetase 1C (362 aa).

It belongs to the 2-5A synthase family. In terms of tissue distribution, expressed at highest level in brain with lesser amounts in spleen, kidney, stomach, liver, intestine, ovary, skin and testis. Not detected in lung, thymus, heart and uterus.

In terms of biological role, does not have 2'-5'-OAS activity, but can bind double-stranded RNA. The protein is Inactive 2'-5' oligoadenylate synthetase 1C of Mus musculus (Mouse).